Reading from the N-terminus, the 132-residue chain is MTMTDPVADMLTRLRNANSAHHDSVKMPFSKLKGHVADILKAEGYIASWKVEDAEVGKSLTIDLKFGPNRERSIAGIRRISKPGLRVYAKSTNLPKVLGGLGVAILSTSSGLLTDRQAAKKGVGGEVLAYVW.

Belongs to the universal ribosomal protein uS8 family. As to quaternary structure, part of the 30S ribosomal subunit. Contacts proteins S5 and S12.

Functionally, one of the primary rRNA binding proteins, it binds directly to 16S rRNA central domain where it helps coordinate assembly of the platform of the 30S subunit. This Renibacterium salmoninarum (strain ATCC 33209 / DSM 20767 / JCM 11484 / NBRC 15589 / NCIMB 2235) protein is Small ribosomal subunit protein uS8.